The following is a 224-amino-acid chain: MENLKKQVGIKAAEFVKSGMVVGLGTGSTAAYFVEELGRRVAEEQLEITGVTTSSVTSEQAKALGIPLASIDEVDYVDLTVDGADEIDSHLNGIKGGGAALLMEKIVATYSKDYIWIVDESKLSENLGSFKVPVEVIRYGSEQLFKEFERAAYAPTWRLNEEGEKLITDMQHFIIDLHIAKIENPQKLADELDLMVGVVEHGLFNDMVKKVIVAGSDGVKIISQ.

Substrate contacts are provided by residues 26 to 29 (TGST), 82 to 85 (DGAD), and 95 to 98 (KGGG). Glu-104 (proton acceptor) is an active-site residue. Lys-122 is a binding site for substrate.

It belongs to the ribose 5-phosphate isomerase family. In terms of assembly, homodimer.

It carries out the reaction aldehydo-D-ribose 5-phosphate = D-ribulose 5-phosphate. The protein operates within carbohydrate degradation; pentose phosphate pathway; D-ribose 5-phosphate from D-ribulose 5-phosphate (non-oxidative stage): step 1/1. In terms of biological role, catalyzes the reversible conversion of ribose-5-phosphate to ribulose 5-phosphate. The sequence is that of Ribose-5-phosphate isomerase A from Lactococcus lactis subsp. cremoris (strain SK11).